A 131-amino-acid polypeptide reads, in one-letter code: Small ribosomal subunit protein uS10m (131 aa).

This sequence belongs to the universal ribosomal protein uS10 family.

The protein localises to the mitochondrion. The sequence is that of Small ribosomal subunit protein uS10m (mrps10) from Dictyostelium discoideum (Social amoeba).